The sequence spans 231 residues: uncharacterized protein (231 aa).

This is an uncharacterized protein from Mycobacterium tuberculosis (strain ATCC 25618 / H37Rv).